The following is a 120-amino-acid chain: Cytochrome c6 (120 aa).

A signal peptide spans 1-35 (MFKLFNQASRIFFGIALPCLIFLGGIFSLGNTALA). Heme c is bound by residues C49, C52, H53, and M93.

This sequence belongs to the cytochrome c family. PetJ subfamily. As to quaternary structure, monomer. Binds 1 heme c group covalently per subunit.

It is found in the cellular thylakoid lumen. Functions as an electron carrier between membrane-bound cytochrome b6-f and photosystem I in oxygenic photosynthesis. This Synechocystis sp. (strain ATCC 27184 / PCC 6803 / Kazusa) protein is Cytochrome c6 (petJ).